The following is a 490-amino-acid chain: O-acetyltransferase PaAT-2 (490 aa).

H165 acts as the Proton acceptor in catalysis.

Belongs to the plant acyltransferase family.

It functions in the pathway mycotoxin biosynthesis. Functionally, O-acetyltransferase; part of the 2 gene clusters that mediate the biosynthesis of fusicoccins, diterpene glucosides that display phytohormone-like activity and function as potent activators of plasma membrane H(+)-ATPases in plants by modifying 14-3-3 proteins and cause the plant disease constriction canker. The first step in the pathway is performed by the fusicoccadiene synthase PaFS that possesses both prenyl transferase and terpene cyclase activity, converting isopentenyl diphosphate and dimethylallyl diphosphate into geranylgeranyl diphosphate (GGDP) and successively converting GGDP into fusicocca-2,10(14)-diene, a precursor for fusicoccin H. The second step is the oxidation at the C-8 position by the cytochrome P450 monooxygenase PaP450-2 to yield fusicocca-2,10(14)-diene-8-beta-ol. The cytochrome P450 monooxygenase PaP450-1 then catalyzes the hydroxylation at the C-16 position to produce fusicocca-2,10(14)-diene-8-beta,16-diol. The dioxygenase fc-dox then catalyzes the 16-oxydation of fusicocca-2,10(14)-diene-8-beta,16-diol to yield an aldehyde (8-beta-hydroxyfusicocca-1,10(14)-dien-16-al). The short-chain dehydrogenase/reductase fc-sdr catalyzes the reduction of the aldehyde to yield fusicocca-1,10(14)-diene-8-beta,16-diol. The next step is the hydroxylation at C-9 performed by the cytochrome P450 monooxygenase PaP450-3 that leads to fusicoccin H aglycon which is glycosylated to fusicoccin H by the O-glycosyltransferase PaGT. Hydroxylation at C-12 by the cytochrome P450 monooxygenase PaP450-4 leads then to the production of fusicoccin Q and is followed by methylation by the O-methyltransferase PaMT to yield fusicoccin P. Fusicoccin P is further converted to fusicoccin J via prenylation by the O-glucose prenyltransferase PaPT. Cytochrome P450 monooxygenase PaP450-5 then performs hydroxylation at C-19 to yield dideacetyl-fusicoccin A which is acetylated to 3'-O-deacetyl-fusicoccin A by the O-acetyltransferase PaAT-2. Finally, a another acetylation by the O-acetyltransferase PaAT-1 yields fusicoccin A. In Phomopsis amygdali (Fusicoccum amygdali), this protein is O-acetyltransferase PaAT-2.